Reading from the N-terminus, the 212-residue chain is Nitrogen regulatory protein P-II homolog (212 aa).

Low complexity-rich tracts occupy residues Met1 to Ala12, Thr32 to Arg46, and Pro63 to Ala74. Residues Met1 to Arg68 constitute a chloroplast transit peptide. The interval Met1–Ala74 is disordered. ATP is bound by residues Gly117 to Gln121 and Gly170 to Lys173. Position 119 (Gly119) interacts with Mg(2+).

The protein belongs to the P(II) protein family. As to quaternary structure, homodimer.

The protein localises to the plastid. The protein resides in the chloroplast. In terms of biological role, participates in sensing carbon and organic nitrogen status and regulates some steps of primary carbon and nitrogen metabolism. The protein is Nitrogen regulatory protein P-II homolog (GLB) of Oryza sativa subsp. japonica (Rice).